Reading from the N-terminus, the 548-residue chain is Probable aquaglyceroporin-4 (548 aa).

A compositionally biased stretch (polar residues) spans M1 to G22. 3 disordered regions span residues M1–T63, S76–H101, and K158–D270. At M1–P290 the chain is on the cytoplasmic side. Over residues P38 to K48 the composition is skewed to basic and acidic residues. Composition is skewed to polar residues over residues R77–S97 and S171–T200. The segment covering P249–C265 has biased composition (basic and acidic residues). The chain crosses the membrane as a helical span at residues L291 to V311. N-linked (GlcNAc...) asparagine glycosylation is present at N312. At N312 to S327 the chain is on the extracellular side. A helical transmembrane segment spans residues C328 to A348. Topologically, residues H349–C369 are cytoplasmic. The NPA 1 motif lies at N351–A353. The chain crosses the membrane as a helical span at residues V370 to M390. The Extracellular portion of the chain corresponds to Y391 to K420. The helical transmembrane segment at S421–G441 threads the bilayer. Topologically, residues D442–P448 are cytoplasmic. A helical transmembrane segment spans residues G449 to G469. The Extracellular segment spans residues Y470–P508. The short motif at N477–A479 is the NPA 2 element. A helical membrane pass occupies residues W509–V529. Over G530 to N548 the chain is Cytoplasmic.

The protein belongs to the MIP/aquaporin (TC 1.A.8) family.

It localises to the membrane. It carries out the reaction H2O(in) = H2O(out). It catalyses the reaction glycerol(in) = glycerol(out). Its function is as follows. Probable water/glycerol channel that may have redundant functions with FgAQP2. This Gibberella zeae (strain ATCC MYA-4620 / CBS 123657 / FGSC 9075 / NRRL 31084 / PH-1) (Wheat head blight fungus) protein is Probable aquaglyceroporin-4.